A 336-amino-acid polypeptide reads, in one-letter code: NADH-quinone oxidoreductase subunit H (336 aa).

The next 8 membrane-spanning stretches (helical) occupy residues 4-24, 75-95, 108-128, 154-174, 181-201, 233-253, 272-292, and 308-328; these read YILW…LVVA, YLFF…WAVI, LGLL…VIAG, MGFA…TGII, LWHW…IAGI, LFFL…SIMF, FVPG…MFLW, and LGWK…ACMV.

The protein belongs to the complex I subunit 1 family. In terms of assembly, NDH-1 is composed of 14 different subunits. Subunits NuoA, H, J, K, L, M, N constitute the membrane sector of the complex.

It localises to the cell inner membrane. It carries out the reaction a quinone + NADH + 5 H(+)(in) = a quinol + NAD(+) + 4 H(+)(out). NDH-1 shuttles electrons from NADH, via FMN and iron-sulfur (Fe-S) centers, to quinones in the respiratory chain. The immediate electron acceptor for the enzyme in this species is believed to be ubiquinone. Couples the redox reaction to proton translocation (for every two electrons transferred, four hydrogen ions are translocated across the cytoplasmic membrane), and thus conserves the redox energy in a proton gradient. This subunit may bind ubiquinone. The sequence is that of NADH-quinone oxidoreductase subunit H from Francisella philomiragia subsp. philomiragia (strain ATCC 25017 / CCUG 19701 / FSC 153 / O#319-036).